The chain runs to 227 residues: 3,4-dihydroxy-2-butanone 4-phosphate synthase (227 aa).

Residues 45-46 (RE), Asp-50, 158-162 (RRGHT), and Glu-182 contribute to the D-ribulose 5-phosphate site. Glu-46 contacts Mg(2+). Residue His-161 participates in Mg(2+) binding.

Belongs to the DHBP synthase family. Homodimer. The cofactor is Mg(2+). Mn(2+) serves as cofactor.

The enzyme catalyses D-ribulose 5-phosphate = (2S)-2-hydroxy-3-oxobutyl phosphate + formate + H(+). It functions in the pathway cofactor biosynthesis; riboflavin biosynthesis; 2-hydroxy-3-oxobutyl phosphate from D-ribulose 5-phosphate: step 1/1. In terms of biological role, catalyzes the conversion of D-ribulose 5-phosphate to formate and 3,4-dihydroxy-2-butanone 4-phosphate. The sequence is that of 3,4-dihydroxy-2-butanone 4-phosphate synthase from Ralstonia nicotianae (strain ATCC BAA-1114 / GMI1000) (Ralstonia solanacearum).